The primary structure comprises 264 residues: Undecaprenyl-diphosphatase (264 aa).

A run of 8 helical transmembrane segments spans residues 1-21, 39-59, 83-103, 113-133, 143-163, 181-201, 220-240, and 244-264; these read MDIV…FLPI, QGLA…VFYF, STLV…GLAF, SGIV…LADK, VTIK…IPGV, VGSA…AGGL, LAAL…MSII, and SMTP…FIFV.

It belongs to the UppP family.

The protein localises to the cell inner membrane. It catalyses the reaction di-trans,octa-cis-undecaprenyl diphosphate + H2O = di-trans,octa-cis-undecaprenyl phosphate + phosphate + H(+). Its function is as follows. Catalyzes the dephosphorylation of undecaprenyl diphosphate (UPP). Confers resistance to bacitracin. The protein is Undecaprenyl-diphosphatase of Campylobacter curvus (strain 525.92).